The chain runs to 205 residues: Proteasome subunit beta type-3 (205 aa).

Ser-2 is subject to N-acetylserine. Lys-77 carries the post-translational modification N6-acetyllysine.

It belongs to the peptidase T1B family. As to quaternary structure, the 26S proteasome consists of a 20S proteasome core and two 19S regulatory subunits. The 20S proteasome core is a barrel-shaped complex made of 28 subunits that are arranged in four stacked rings. The two outer rings are each formed by seven alpha subunits, and the two inner rings are formed by seven beta subunits. The proteolytic activity is exerted by three beta-subunits PSMB5, PSMB6 and PSMB7.

The protein localises to the cytoplasm. Its subcellular location is the nucleus. In terms of biological role, non-catalytic component of the 20S core proteasome complex involved in the proteolytic degradation of most intracellular proteins. This complex plays numerous essential roles within the cell by associating with different regulatory particles. Associated with two 19S regulatory particles, forms the 26S proteasome and thus participates in the ATP-dependent degradation of ubiquitinated proteins. The 26S proteasome plays a key role in the maintenance of protein homeostasis by removing misfolded or damaged proteins that could impair cellular functions, and by removing proteins whose functions are no longer required. Associated with the PA200 or PA28, the 20S proteasome mediates ubiquitin-independent protein degradation. This type of proteolysis is required in several pathways including spermatogenesis (20S-PA200 complex) or generation of a subset of MHC class I-presented antigenic peptides (20S-PA28 complex). In Bos taurus (Bovine), this protein is Proteasome subunit beta type-3 (PSMB3).